The primary structure comprises 227 residues: UPF0173 metal-dependent hydrolase BPUM_2573 (227 aa).

This sequence belongs to the UPF0173 family.

This Bacillus pumilus (strain SAFR-032) protein is UPF0173 metal-dependent hydrolase BPUM_2573.